The chain runs to 101 residues: Vacuolar ATPase assembly integral membrane protein VMA21 (101 aa).

At 1 to 25 (MERLDKAALNALQPSDFRNESSLAS) the chain is on the cytoplasmic side. The helical transmembrane segment at 26–46 (TLKTLLFFTALMITVPIGLYF) threads the bilayer. The Lumenal portion of the chain corresponds to 47 to 65 (TTKSYVFEGAFGMSNRDSY). A helical membrane pass occupies residues 66-86 (FYAAIVAVVAVHVVLALFVYV). Topologically, residues 87–101 (AWNEGSRQWREGKQD) are cytoplasmic.

This sequence belongs to the VMA21 family. As to quaternary structure, associates with the V0 complex of the vacuolar ATPase (V-ATPase). Interacts with ATP6AP2.

Its subcellular location is the endoplasmic reticulum membrane. It is found in the endoplasmic reticulum-Golgi intermediate compartment membrane. The protein resides in the cytoplasmic vesicle. The protein localises to the COPII-coated vesicle membrane. In terms of biological role, required for the assembly of the V0 complex of the vacuolar ATPase (V-ATPase) in the endoplasmic reticulum. The protein is Vacuolar ATPase assembly integral membrane protein VMA21 of Bos taurus (Bovine).